The chain runs to 402 residues: Elongation factor Tu (402 aa).

One can recognise a tr-type G domain in the interval 16 to 211; sequence KEHINIGTIG…AVDSYIDSPV (196 aa). The G1 stretch occupies residues 25 to 32; sequence GHVDHGKT. 25 to 32 lines the GTP pocket; sequence GHVDHGKT. Threonine 32 serves as a coordination point for Mg(2+). The interval 66–70 is G2; it reads GITIN. The tract at residues 87–90 is G3; that stretch reads DCPG. GTP is bound by residues 87–91 and 142–145; these read DCPGH and NKID. The tract at residues 142 to 145 is G4; the sequence is NKID. The segment at 181 to 183 is G5; sequence SAR.

The protein belongs to the TRAFAC class translation factor GTPase superfamily. Classic translation factor GTPase family. EF-Tu/EF-1A subfamily. Monomer.

It is found in the cytoplasm. It carries out the reaction GTP + H2O = GDP + phosphate + H(+). In terms of biological role, GTP hydrolase that promotes the GTP-dependent binding of aminoacyl-tRNA to the A-site of ribosomes during protein biosynthesis. This is Elongation factor Tu from Mesomycoplasma hyopneumoniae (strain 232) (Mycoplasma hyopneumoniae).